Reading from the N-terminus, the 241-residue chain is Leucyl/phenylalanyl-tRNA--protein transferase (241 aa).

The protein belongs to the L/F-transferase family.

It is found in the cytoplasm. The enzyme catalyses N-terminal L-lysyl-[protein] + L-leucyl-tRNA(Leu) = N-terminal L-leucyl-L-lysyl-[protein] + tRNA(Leu) + H(+). It carries out the reaction N-terminal L-arginyl-[protein] + L-leucyl-tRNA(Leu) = N-terminal L-leucyl-L-arginyl-[protein] + tRNA(Leu) + H(+). It catalyses the reaction L-phenylalanyl-tRNA(Phe) + an N-terminal L-alpha-aminoacyl-[protein] = an N-terminal L-phenylalanyl-L-alpha-aminoacyl-[protein] + tRNA(Phe). Functionally, functions in the N-end rule pathway of protein degradation where it conjugates Leu, Phe and, less efficiently, Met from aminoacyl-tRNAs to the N-termini of proteins containing an N-terminal arginine or lysine. This chain is Leucyl/phenylalanyl-tRNA--protein transferase, found in Neisseria meningitidis serogroup A / serotype 4A (strain DSM 15465 / Z2491).